A 338-amino-acid chain; its full sequence is Putative peptide import ATP-binding protein BruAb2_0796 (338 aa).

The 257-residue stretch at 7–263 folds into the ABC transporter domain; sequence LDIEGLRTVF…PRHPYTMGLL (257 aa). 43–50 serves as a coordination point for ATP; sequence GESGSGKS.

It belongs to the ABC transporter superfamily. The complex is composed of two ATP-binding proteins (BruAb2_0796 and BruAb2_0797), two transmembrane proteins (BruAb2_0794) and a solute-binding protein (BruAb2_0792).

It is found in the cell inner membrane. In terms of biological role, probably part of an ABC transporter complex that could be involved in peptide import. Probably responsible for energy coupling to the transport system. The polypeptide is Putative peptide import ATP-binding protein BruAb2_0796 (Brucella abortus biovar 1 (strain 9-941)).